We begin with the raw amino-acid sequence, 166 residues long: Ureidoglycolate lyase (166 aa).

The protein belongs to the ureidoglycolate lyase family. As to quaternary structure, homodimer. The cofactor is Ni(2+).

It carries out the reaction (S)-ureidoglycolate = urea + glyoxylate. The protein operates within nitrogen metabolism; (S)-allantoin degradation. Catalyzes the catabolism of the allantoin degradation intermediate (S)-ureidoglycolate, generating urea and glyoxylate. Involved in the utilization of allantoin as nitrogen source. This is Ureidoglycolate lyase from Rhizobium etli (strain CIAT 652).